The sequence spans 129 residues: Large ribosomal subunit protein bL12 (129 aa).

Residues 94-113 (TEGLPKTVKEKTSKSDAEDT) are disordered.

Belongs to the bacterial ribosomal protein bL12 family. Homodimer. Part of the ribosomal stalk of the 50S ribosomal subunit. Forms a multimeric L10(L12)X complex, where L10 forms an elongated spine to which 2 to 4 L12 dimers bind in a sequential fashion. Binds GTP-bound translation factors.

Forms part of the ribosomal stalk which helps the ribosome interact with GTP-bound translation factors. Is thus essential for accurate translation. In Chlamydia pneumoniae (Chlamydophila pneumoniae), this protein is Large ribosomal subunit protein bL12.